The chain runs to 354 residues: uncharacterized protein (354 aa).

The protein belongs to the asfivirus B354L family.

This is an uncharacterized protein from African swine fever virus (isolate Tick/South Africa/Pretoriuskop Pr4/1996) (ASFV).